A 163-amino-acid polypeptide reads, in one-letter code: Cytosolic iron-sulfur assembly component 2B (163 aa).

Belongs to the MIP18 family.

The protein resides in the nucleus. Its subcellular location is the cytoplasm. It localises to the cytoskeleton. It is found in the spindle. Its function is as follows. Component of the cytosolic iron-sulfur (Fe/S) protein assembly machinery. Required for the maturation of extramitochondrial Fe/S proteins. May play a role in chromosome segregation through establishment of sister chromatid cohesion. This chain is Cytosolic iron-sulfur assembly component 2B, found in Dictyostelium discoideum (Social amoeba).